Reading from the N-terminus, the 682-residue chain is Potassium-transporting ATPase ATP-binding subunit (682 aa).

Transmembrane regions (helical) follow at residues 34–54, 58–78, 219–239, and 254–274; these read PVMFVVWASSVLTTLLTLAMV, IAGSALFTGVISLWLWFTVLF, IALTILLIALTIVFLLATATL, and VLVALLVCLIPTTIGGLLSAI. Aspartate 307 serves as the catalytic 4-aspartylphosphate intermediate. Residues aspartate 344, glutamate 348, 377–384, and lysine 395 contribute to the ATP site; that span reads FTAQSRMS. Mg(2+) contacts are provided by aspartate 518 and aspartate 522. The next 3 helical transmembrane spans lie at 588 to 608, 616 to 636, and 662 to 682; these read FAIIPAAFAATYPQLNALNVM, AILSAVIFNALIIIFLIPLAL, and LVVPFIGIKVIDVLLTLLGLA.

It belongs to the cation transport ATPase (P-type) (TC 3.A.3) family. Type IA subfamily. As to quaternary structure, the system is composed of three essential subunits: KdpA, KdpB and KdpC.

It is found in the cell inner membrane. It carries out the reaction K(+)(out) + ATP + H2O = K(+)(in) + ADP + phosphate + H(+). Its function is as follows. Part of the high-affinity ATP-driven potassium transport (or Kdp) system, which catalyzes the hydrolysis of ATP coupled with the electrogenic transport of potassium into the cytoplasm. This subunit is responsible for energy coupling to the transport system and for the release of the potassium ions to the cytoplasm. The sequence is that of Potassium-transporting ATPase ATP-binding subunit from Salmonella choleraesuis (strain SC-B67).